Reading from the N-terminus, the 199-residue chain is Imidazole glycerol phosphate synthase subunit HisH 2 (199 aa).

The Glutamine amidotransferase type-1 domain occupies 1–199 (MIAVIDVSGN…NNFLSLESTC (199 aa)). Catalysis depends on cysteine 76, which acts as the Nucleophile. Residues histidine 177 and glutamate 179 contribute to the active site.

Heterodimer of HisH and HisF.

Its subcellular location is the cytoplasm. It catalyses the reaction 5-[(5-phospho-1-deoxy-D-ribulos-1-ylimino)methylamino]-1-(5-phospho-beta-D-ribosyl)imidazole-4-carboxamide + L-glutamine = D-erythro-1-(imidazol-4-yl)glycerol 3-phosphate + 5-amino-1-(5-phospho-beta-D-ribosyl)imidazole-4-carboxamide + L-glutamate + H(+). The catalysed reaction is L-glutamine + H2O = L-glutamate + NH4(+). The protein operates within amino-acid biosynthesis; L-histidine biosynthesis; L-histidine from 5-phospho-alpha-D-ribose 1-diphosphate: step 5/9. IGPS catalyzes the conversion of PRFAR and glutamine to IGP, AICAR and glutamate. The HisH subunit provides the glutamine amidotransferase activity that produces the ammonia necessary to HisF for the synthesis of IGP and AICAR. The protein is Imidazole glycerol phosphate synthase subunit HisH 2 of Legionella pneumophila subsp. pneumophila (strain Philadelphia 1 / ATCC 33152 / DSM 7513).